Here is a 20-residue protein sequence, read N- to C-terminus: Punein (20 aa).

The region spanning 1-20 (YHYYNPEENHFCATWDASKP) is the Barwin domain.

In terms of processing, the N-terminus is blocked.

The polypeptide is Punein (Punica granatum (Pomegranate)).